A 363-amino-acid polypeptide reads, in one-letter code: Chorismate synthase (363 aa).

Arginine 48 and arginine 54 together coordinate NADP(+). Residues 125 to 127, 238 to 239, glycine 278, 293 to 297, and arginine 319 contribute to the FMN site; these read RSS, NA, and KPTSS.

Belongs to the chorismate synthase family. In terms of assembly, homotetramer. It depends on FMNH2 as a cofactor.

It carries out the reaction 5-O-(1-carboxyvinyl)-3-phosphoshikimate = chorismate + phosphate. Its pathway is metabolic intermediate biosynthesis; chorismate biosynthesis; chorismate from D-erythrose 4-phosphate and phosphoenolpyruvate: step 7/7. In terms of biological role, catalyzes the anti-1,4-elimination of the C-3 phosphate and the C-6 proR hydrogen from 5-enolpyruvylshikimate-3-phosphate (EPSP) to yield chorismate, which is the branch point compound that serves as the starting substrate for the three terminal pathways of aromatic amino acid biosynthesis. This reaction introduces a second double bond into the aromatic ring system. This is Chorismate synthase from Acidithiobacillus ferrooxidans (strain ATCC 23270 / DSM 14882 / CIP 104768 / NCIMB 8455) (Ferrobacillus ferrooxidans (strain ATCC 23270)).